Consider the following 235-residue polypeptide: tRNA1(Val) (adenine(37)-N6)-methyltransferase (235 aa).

The protein belongs to the methyltransferase superfamily. tRNA (adenine-N(6)-)-methyltransferase family.

It localises to the cytoplasm. The enzyme catalyses adenosine(37) in tRNA1(Val) + S-adenosyl-L-methionine = N(6)-methyladenosine(37) in tRNA1(Val) + S-adenosyl-L-homocysteine + H(+). Its function is as follows. Specifically methylates the adenine in position 37 of tRNA(1)(Val) (anticodon cmo5UAC). This is tRNA1(Val) (adenine(37)-N6)-methyltransferase from Flavobacterium johnsoniae (strain ATCC 17061 / DSM 2064 / JCM 8514 / BCRC 14874 / CCUG 350202 / NBRC 14942 / NCIMB 11054 / UW101) (Cytophaga johnsonae).